Consider the following 282-residue polypeptide: Bicarbonate transport ATP-binding protein CmpD (282 aa).

In terms of domain architecture, ABC transporter spans L24–E257. G60 to S67 provides a ligand contact to ATP.

The protein belongs to the ABC transporter superfamily. Nitrate/nitrite/cyanate uptake transporter (NitT) (TC 3.A.1.16) family. The complex is composed of two ATP-binding proteins (CmpC and CmpD), a transmembrane protein (CmpB) and a solute-binding protein (CmpA).

Its subcellular location is the cell inner membrane. Its function is as follows. Part of the ABC transporter complex CmpABCD involved in bicarbonate transport. Responsible for energy coupling to the transport system. This chain is Bicarbonate transport ATP-binding protein CmpD (cmpD), found in Synechocystis sp. (strain ATCC 27184 / PCC 6803 / Kazusa).